The primary structure comprises 493 residues: Extracellular tyrosine-protein kinase PKDCC (493 aa).

Positions 1–32 (MRRRRAAVAAGFCASFLLGSVLNVLFAPGSEP) are cleaved as a signal peptide. Residues 28–128 (PGSEPPRPGQ…PGPGSPGPGP (101 aa)) form a disordered region. Residues 30–46 (SEPPRPGQSPEPSPAPG) are compositionally biased toward pro residues. Basic and acidic residues predominate over residues 52–69 (GRGELARQIRARYEEVQR). Composition is skewed to pro residues over residues 95–105 (PGLPRPRPPWA) and 114–127 (GWPP…PGPG). A glycan (N-linked (GlcNAc...) asparagine) is linked at N137. Residues 138 to 493 (VSGAQYMGSG…NKTTYVKASG (356 aa)) enclose the Protein kinase domain. Residues 144–152 (MGSGYTKAV) and K166 contribute to the ATP site. At Y148 the chain carries Phosphotyrosine. S177 is modified (phosphoserine). D278 serves as the catalytic Proton acceptor. N-linked (GlcNAc...) asparagine glycosylation is found at N320, N369, N400, N460, and N484.

It belongs to the protein kinase superfamily. In terms of processing, N-glycosylated. Post-translationally, phosphorylated on tyrosines; probably via autophosphorylation. Highly expressed in platelets.

It is found in the secreted. Its subcellular location is the golgi apparatus. The catalysed reaction is L-tyrosyl-[protein] + ATP = O-phospho-L-tyrosyl-[protein] + ADP + H(+). Functionally, secreted tyrosine-protein kinase that mediates phosphorylation of extracellular proteins and endogenous proteins in the secretory pathway, which is essential for patterning at organogenesis stages. Mediates phosphorylation of MMP1, MMP13, MMP14, MMP19 and ERP29. Probably plays a role in platelets: rapidly and quantitatively secreted from platelets in response to stimulation of platelet degranulation. May also have serine/threonine protein kinase activity. Required for longitudinal bone growth through regulation of chondrocyte differentiation. May be indirectly involved in protein transport from the Golgi apparatus to the plasma membrane. The sequence is that of Extracellular tyrosine-protein kinase PKDCC from Homo sapiens (Human).